A 66-amino-acid chain; its full sequence is Large ribosomal subunit protein bL31 (66 aa).

Cys16, Cys18, Cys36, and Cys39 together coordinate Zn(2+).

Belongs to the bacterial ribosomal protein bL31 family. Type A subfamily. In terms of assembly, part of the 50S ribosomal subunit. It depends on Zn(2+) as a cofactor.

Its function is as follows. Binds the 23S rRNA. The polypeptide is Large ribosomal subunit protein bL31 (Natranaerobius thermophilus (strain ATCC BAA-1301 / DSM 18059 / JW/NM-WN-LF)).